We begin with the raw amino-acid sequence, 701 residues long: Kinesin-like protein KIN-10C (701 aa).

One can recognise a Kinesin motor domain in the interval 8–318; the sequence is VVRVVARVKP…LNLASRICLG (311 aa). 94–101 is an ATP binding site; the sequence is GARNSGKT.

This sequence belongs to the TRAFAC class myosin-kinesin ATPase superfamily. Kinesin family. KIN-10 subfamily.

In Arabidopsis thaliana (Mouse-ear cress), this protein is Kinesin-like protein KIN-10C.